We begin with the raw amino-acid sequence, 489 residues long: Interferon gamma receptor 1 (489 aa).

Positions 1–17 (MALLFLLPLVMQGVSRA) are cleaved as a signal peptide. The Extracellular portion of the chain corresponds to 18–245 (EMGTADLGPS…ITIFNSSIKG (228 aa)). 3 N-linked (GlcNAc...) asparagine glycosylation sites follow: asparagine 34, asparagine 79, and asparagine 86. Cysteine 77 and cysteine 85 are joined by a disulfide. A disulfide bond links cysteine 122 and cysteine 167. Asparagine 179 carries an N-linked (GlcNAc...) asparagine glycan. Disulfide bonds link cysteine 195/cysteine 200 and cysteine 214/cysteine 235. Asparagine 240 carries an N-linked (GlcNAc...) asparagine glycan. The helical transmembrane segment at 246–266 (SLWIPVVAALLLFLVLSLVFI) threads the bilayer. The Cytoplasmic segment spans residues 267 to 489 (CFYIKKINPL…RPTEDSKEFS (223 aa)). Residues 329–437 (ATVPGMHTED…SEFPPNNKGE (109 aa)) form a disordered region. Over residues 335–348 (HTEDNPGKVEHTEE) the composition is skewed to basic and acidic residues. Residues 349–360 (LSSITEVVTTEE) show a composition bias toward polar residues. At serine 369 the chain carries Phosphoserine. Threonine 372 bears the Phosphothreonine mark. Serine 378 carries the post-translational modification Phosphoserine. Low complexity predominate over residues 379–391 (SSPLSSNQSEPGS). The segment covering 401 to 412 (NCSESDHSRNGF) has biased composition (basic and acidic residues). The residue at position 403 (serine 403) is a Phosphoserine. Residues 415–429 (DSSCLESHSSLSDSE) show a composition bias toward low complexity. Tyrosine 457 carries the phosphotyrosine modification.

The protein belongs to the type II cytokine receptor family. In terms of assembly, monomer. Heterodimer with IFNGR2, to form the IFNG receptor complex. Interacts with JAK1. Interacts (when phosphorylated) with STAT1. Interacts with SOCS1. In terms of processing, phosphorylated at Ser/Thr residues. Phosphorylation of Tyr-457 is required for IFNG receptor signal transduction. Influenza virus infection leads to phosphorylation in a CSNK1A1-dependent manner. Post-translationally, ubiquitinated after phosphorylation in a CSNK1A1-dependent manner, leading to the lysosome-dependent degradation. Proteasomally degraded through 'Lys-48'-mediated ubiquitination. Ubiquitination is necessary for efficient IFNGR1 signaling.

The protein resides in the cell membrane. Receptor subunit for interferon gamma/INFG that plays crucial roles in antimicrobial, antiviral, and antitumor responses by activating effector immune cells and enhancing antigen presentation. Associates with transmembrane accessory factor IFNGR2 to form a functional receptor. Upon ligand binding, the intracellular domain of IFNGR1 opens out to allow association of downstream signaling components JAK1 and JAK2. In turn, activated JAK1 phosphorylates IFNGR1 to form a docking site for STAT1. Subsequent phosphorylation of STAT1 leads to dimerization, translocation to the nucleus, and stimulation of target gene transcription. STAT3 can also be activated in a similar manner although activation seems weaker. IFNGR1 intracellular domain phosphorylation also provides a docking site for SOCS1 that regulates the JAK-STAT pathway by competing with STAT1 binding to IFNGR1. The sequence is that of Interferon gamma receptor 1 from Homo sapiens (Human).